The sequence spans 343 residues: UDP-3-O-acylglucosamine N-acyltransferase 2 (343 aa).

Histidine 251 (proton acceptor) is an active-site residue.

Belongs to the transferase hexapeptide repeat family. LpxD subfamily. In terms of assembly, homotrimer.

The catalysed reaction is a UDP-3-O-[(3R)-3-hydroxyacyl]-alpha-D-glucosamine + a (3R)-hydroxyacyl-[ACP] = a UDP-2-N,3-O-bis[(3R)-3-hydroxyacyl]-alpha-D-glucosamine + holo-[ACP] + H(+). It participates in bacterial outer membrane biogenesis; LPS lipid A biosynthesis. Its function is as follows. Catalyzes the N-acylation of UDP-3-O-acylglucosamine using 3-hydroxyacyl-ACP as the acyl donor. Is involved in the biosynthesis of lipid A, a phosphorylated glycolipid that anchors the lipopolysaccharide to the outer membrane of the cell. This chain is UDP-3-O-acylglucosamine N-acyltransferase 2, found in Legionella pneumophila (strain Lens).